The chain runs to 118 residues: MAAEGEVIACHTVEDWTEKLKAANESKKLIVIDFTATWCPPCRFIAPVFADLAKKHLDVVFFKVDVDELNTVAEEFKVQAMPTFIFMKEGEIKETVVGAAKEEIIANLEKHKTVVAAA.

At A2 the chain carries N-acetylalanine. Positions 2-113 (AAEGEVIACH…IIANLEKHKT (112 aa)) constitute a Thioredoxin domain. Active-site nucleophile residues include C39 and C42. A disulfide bridge connects residues C39 and C42.

It belongs to the thioredoxin family. Plant H-type subfamily. In terms of assembly, interacts with FBA5 and FBA8. Interacts with FBA6. Interacts with MDH1.

Its subcellular location is the cytoplasm. Functionally, thiol-disulfide oxidoreductase that possesses disulfide reductase and insulin disulfide bonds reducing activities. Heat shock causes oligomerization and formation of high molecular weight (HMW) complexes with concomitant functional switching from a disulfide reductase to chaperone. The chain is Thioredoxin H3 (TRX3) from Arabidopsis thaliana (Mouse-ear cress).